A 609-amino-acid chain; its full sequence is Glutamine--fructose-6-phosphate aminotransferase [isomerizing] (609 aa).

The active-site Nucleophile; for GATase activity is the C2. One can recognise a Glutamine amidotransferase type-2 domain in the interval 2–219; the sequence is CGIFGYLGSK…SGELAIVGLG (218 aa). SIS domains are found at residues 280 to 426 and 458 to 599; these read ISEK…SKHT and WAHT…IDCP. K604 serves as the catalytic For Fru-6P isomerization activity.

As to quaternary structure, homodimer.

The protein resides in the cytoplasm. It carries out the reaction D-fructose 6-phosphate + L-glutamine = D-glucosamine 6-phosphate + L-glutamate. In terms of biological role, catalyzes the first step in hexosamine metabolism, converting fructose-6P into glucosamine-6P using glutamine as a nitrogen source. This is Glutamine--fructose-6-phosphate aminotransferase [isomerizing] from Chlamydia abortus (strain DSM 27085 / S26/3) (Chlamydophila abortus).